The primary structure comprises 407 residues: ATP-citrate synthase subunit alpha chain protein 1 (407 aa).

Asparagine 327, threonine 329, and arginine 360 together coordinate citrate.

The protein belongs to the succinate/malate CoA ligase beta subunit family. Heterooctamer of 4 alpha and 4 beta chains.

Its subcellular location is the cytoplasm. The protein resides in the cytosol. It carries out the reaction oxaloacetate + acetyl-CoA + ADP + phosphate = citrate + ATP + CoA. ATP citrate-lyase is the primary enzyme responsible for the synthesis of cytosolic acetyl-CoA, used for the elongation of fatty acids and biosynthesis of isoprenoids, flavonoids and malonated derivatives. May supply substrate to the cytosolic acetyl-CoA carboxylase, which generates the malonyl-CoA used for the synthesis of a multitude of compounds, including very long chain fatty acids and flavonoids. In contrast to all known animal ACL enzymes having a homomeric structure, plant ACLs are composed of alpha and beta chains. The polypeptide is ATP-citrate synthase subunit alpha chain protein 1 (ACLA-1) (Oryza sativa subsp. japonica (Rice)).